A 727-amino-acid chain; its full sequence is Probable acyl-activating enzyme 18, peroxisomal (727 aa).

Residues 725–727 (SRI) carry the Microbody targeting signal motif.

This sequence belongs to the ATP-dependent AMP-binding enzyme family. As to expression, expressed in flowers.

The protein resides in the peroxisome. May be involved in the peroxisomal activation of 2,4-dichlorophenoxybutyric acid (2,4-DB), a precursor of active auxins that inhibit root growth. The protein is Probable acyl-activating enzyme 18, peroxisomal (AAE18) of Arabidopsis thaliana (Mouse-ear cress).